Reading from the N-terminus, the 355-residue chain is 3-dehydroquinate synthase (355 aa).

Residues 71-76 (EGEASK), 105-109 (GVVGD), 129-130 (TS), lysine 142, lysine 151, and 169-172 (TLNT) each bind NAD(+). Positions 184, 246, and 263 each coordinate Zn(2+).

The protein belongs to the sugar phosphate cyclases superfamily. Dehydroquinate synthase family. The cofactor is NAD(+). Requires Co(2+) as cofactor. It depends on Zn(2+) as a cofactor.

It localises to the cytoplasm. It carries out the reaction 7-phospho-2-dehydro-3-deoxy-D-arabino-heptonate = 3-dehydroquinate + phosphate. It participates in metabolic intermediate biosynthesis; chorismate biosynthesis; chorismate from D-erythrose 4-phosphate and phosphoenolpyruvate: step 2/7. Its function is as follows. Catalyzes the conversion of 3-deoxy-D-arabino-heptulosonate 7-phosphate (DAHP) to dehydroquinate (DHQ). The polypeptide is 3-dehydroquinate synthase (Streptococcus mutans serotype c (strain ATCC 700610 / UA159)).